We begin with the raw amino-acid sequence, 118 residues long: Late cornified envelope protein 1C (118 aa).

Over residues 1-10 (MSCQQSQQQC) the composition is skewed to low complexity. Disordered regions lie at residues 1-23 (MSCQ…CPPK) and 87-118 (CHRP…GGCC). The span at 11–23 (QPPPKCTPKCPPK) shows a compositional bias: pro residues. Over residues 90 to 103 (PQSSGCCSQPSGGS) the composition is skewed to low complexity. The span at 104–118 (SCCGGGSGQHSGGCC) shows a compositional bias: gly residues.

Belongs to the LCE family. As to quaternary structure, interacts with CYSRT1. As to expression, skin-specific. Expression was readily detected in adult trunk skin, adult arm skin, fetal skin, penal skin, vulva, esophagus and tongue. Not expressed in the cervix, rectum, lung, colon, or placenta.

Its function is as follows. Precursors of the cornified envelope of the stratum corneum. This chain is Late cornified envelope protein 1C (LCE1C), found in Homo sapiens (Human).